The following is a 292-amino-acid chain: Ribosomal protein L11 methyltransferase (292 aa).

The S-adenosyl-L-methionine site is built by Thr138, Gly159, Asp181, and Asn225.

This sequence belongs to the methyltransferase superfamily. PrmA family.

It localises to the cytoplasm. It carries out the reaction L-lysyl-[protein] + 3 S-adenosyl-L-methionine = N(6),N(6),N(6)-trimethyl-L-lysyl-[protein] + 3 S-adenosyl-L-homocysteine + 3 H(+). Its function is as follows. Methylates ribosomal protein L11. In Leuconostoc citreum (strain KM20), this protein is Ribosomal protein L11 methyltransferase.